The following is a 484-amino-acid chain: tRNA sulfurtransferase (484 aa).

Positions 63 to 167 (EAFGERLACI…NDNLYLIDKR (105 aa)) constitute a THUMP domain. ATP-binding positions include 185–186 (LI), K267, G289, and Q298. The cysteines at positions 346 and 458 are disulfide-linked. A Rhodanese domain is found at 406–484 (INANEIIIDV…GYTNVKVYRP (79 aa)). C458 serves as the catalytic Cysteine persulfide intermediate.

It belongs to the ThiI family.

It localises to the cytoplasm. It carries out the reaction [ThiI sulfur-carrier protein]-S-sulfanyl-L-cysteine + a uridine in tRNA + 2 reduced [2Fe-2S]-[ferredoxin] + ATP + H(+) = [ThiI sulfur-carrier protein]-L-cysteine + a 4-thiouridine in tRNA + 2 oxidized [2Fe-2S]-[ferredoxin] + AMP + diphosphate. The enzyme catalyses [ThiS sulfur-carrier protein]-C-terminal Gly-Gly-AMP + S-sulfanyl-L-cysteinyl-[cysteine desulfurase] + AH2 = [ThiS sulfur-carrier protein]-C-terminal-Gly-aminoethanethioate + L-cysteinyl-[cysteine desulfurase] + A + AMP + 2 H(+). It functions in the pathway cofactor biosynthesis; thiamine diphosphate biosynthesis. Functionally, catalyzes the ATP-dependent transfer of a sulfur to tRNA to produce 4-thiouridine in position 8 of tRNAs, which functions as a near-UV photosensor. Also catalyzes the transfer of sulfur to the sulfur carrier protein ThiS, forming ThiS-thiocarboxylate. This is a step in the synthesis of thiazole, in the thiamine biosynthesis pathway. The sulfur is donated as persulfide by IscS. The sequence is that of tRNA sulfurtransferase from Shewanella halifaxensis (strain HAW-EB4).